The following is a 66-amino-acid chain: Alpha-like toxin BeM9 (66 aa).

Positions 2–66 (RDAYIAKPHN…VPIRIPGKCH (65 aa)) constitute an LCN-type CS-alpha/beta domain. 4 disulfides stabilise this stretch: cysteine 12–cysteine 65, cysteine 16–cysteine 38, cysteine 24–cysteine 48, and cysteine 28–cysteine 50.

It belongs to the long (4 C-C) scorpion toxin superfamily. Sodium channel inhibitor family. Alpha subfamily. In terms of tissue distribution, expressed by the venom gland.

It localises to the secreted. Alpha toxins bind voltage-independently at site-3 of sodium channels (Nav) and inhibit the inactivation of the activated channels, thereby blocking neuronal transmission. This toxin is active on both mammals and insects, since it inhibits inactivation of rNav1.4/SCN4A, hNav1.5/SCN5A, mNav1.6/SCN8A and insect BgNav1 and DmNav1 channels. In vivo, it shows paralytic activity in mice. The chain is Alpha-like toxin BeM9 from Mesobuthus eupeus (Lesser Asian scorpion).